We begin with the raw amino-acid sequence, 679 residues long: Protein asunder (679 aa).

Positions 519–541 (RLKVNKTKDQYRLFYRELEQLIQ) form a coiled coil. The interval 564–610 (GDASNKSDPSAAHLRSYTESPLSPERLEPTNSVNSSSSSILKASKRR) is disordered. Positions 604 to 610 (LKASKRR) match the Nuclear localization signal (NLS) motif.

This sequence belongs to the Integrator subunit 13 family. Belongs to the multiprotein complex Integrator, at least composed of IntS1, IntS2, IntS3, IntS4, omd/IntS5, IntS6, defl/IntS7, IntS8, IntS9, IntS10, IntS11, IntS12, asun/IntS13, IntS14 and IntS15. The core complex associates with protein phosphatase 2A subunits mts/PP2A and Pp2A-29B, to form the Integrator-PP2A (INTAC) complex. In terms of processing, phosphorylated.

It is found in the nucleus. The protein resides in the cytoplasm. Its subcellular location is the perinuclear region. Functionally, component of the integrator complex, a multiprotein complex that terminates RNA polymerase II (Pol II) transcription in the promoter-proximal region of genes. The integrator complex provides a quality checkpoint during transcription elongation by driving premature transcription termination of transcripts that are unfavorably configured for transcriptional elongation: the complex terminates transcription by (1) catalyzing dephosphorylation of the C-terminal domain (CTD) of Pol II subunit Polr2A/Rbp1 and Spt5, and (2) degrading the exiting nascent RNA transcript via endonuclease activity. The integrator complex is also involved in the 3'-end processing of the U7 snRNA, and also the spliceosomal snRNAs U1, U2, U4 and U5. In Drosophila mojavensis (Fruit fly), this protein is Protein asunder (asun).